Consider the following 427-residue polypeptide: Kallistatin (427 aa).

An N-terminal signal peptide occupies residues 1 to 20 (MHLIDYLLLLLVGLLALSHG). Residues Asn33, Asn108, Asn157, and Asn238 are each glycosylated (N-linked (GlcNAc...) asparagine).

Belongs to the serpin family. Monomer and some homodimers.

Its subcellular location is the secreted. Its function is as follows. Inhibits human amidolytic and kininogenase activities of tissue kallikrein. The sequence is that of Kallistatin (SERPINA4) from Pongo abelii (Sumatran orangutan).